Here is a 984-residue protein sequence, read N- to C-terminus: Probable beta-galactosidase C (984 aa).

Residues 1-23 (MRLLSFIYLVWLALLTGTPQVSA) form the signal peptide. Residues Tyr-82, Asn-127, Ala-128, Glu-129, and Asn-187 each contribute to the substrate site. The active-site Proton donor is the Glu-188. N-linked (GlcNAc...) asparagine glycosylation occurs at Asn-197. Tyr-251 provides a ligand contact to substrate. The cysteines at positions 257 and 304 are disulfide-linked. N-linked (GlcNAc...) asparagine glycosylation occurs at Asn-276. The active-site Nucleophile is the Glu-287. Tyr-353 serves as a coordination point for substrate. Residues Asn-391, Asn-421, Asn-434, Asn-517, Asn-602, Asn-677, Asn-715, Asn-720, Asn-759, and Asn-805 are each glycosylated (N-linked (GlcNAc...) asparagine).

It belongs to the glycosyl hydrolase 35 family.

The protein resides in the secreted. The enzyme catalyses Hydrolysis of terminal non-reducing beta-D-galactose residues in beta-D-galactosides.. Its function is as follows. Cleaves beta-linked terminal galactosyl residues from gangliosides, glycoproteins, and glycosaminoglycans. The polypeptide is Probable beta-galactosidase C (lacC) (Aspergillus oryzae (strain ATCC 42149 / RIB 40) (Yellow koji mold)).